The following is a 298-amino-acid chain: Protoheme IX farnesyltransferase (298 aa).

Transmembrane regions (helical) follow at residues 16–36, 45–65, 93–113, 114–134, 141–161, 172–192, 223–243, 244–264, and 277–297; these read VVAL…PDMP, ALGF…NQLL, VFAG…VNVI, TAVL…VYLK, IVIG…AVTG, SLLV…LAIF, VLLA…VFYL, GGAI…LNPP, and IVYL…LPWV.

Belongs to the UbiA prenyltransferase family. Protoheme IX farnesyltransferase subfamily.

The protein localises to the cell inner membrane. It catalyses the reaction heme b + (2E,6E)-farnesyl diphosphate + H2O = Fe(II)-heme o + diphosphate. It functions in the pathway porphyrin-containing compound metabolism; heme O biosynthesis; heme O from protoheme: step 1/1. Functionally, converts heme B (protoheme IX) to heme O by substitution of the vinyl group on carbon 2 of heme B porphyrin ring with a hydroxyethyl farnesyl side group. The chain is Protoheme IX farnesyltransferase from Xanthomonas euvesicatoria pv. vesicatoria (strain 85-10) (Xanthomonas campestris pv. vesicatoria).